The primary structure comprises 377 residues: Succinyl-diaminopimelate desuccinylase 2 (377 aa).

H62 lines the Zn(2+) pocket. Residue D64 is part of the active site. Zn(2+) is bound at residue D95. The Proton acceptor role is filled by E129. E130, E158, and H350 together coordinate Zn(2+).

This sequence belongs to the peptidase M20A family. DapE subfamily. Homodimer. It depends on Zn(2+) as a cofactor. Requires Co(2+) as cofactor.

The enzyme catalyses N-succinyl-(2S,6S)-2,6-diaminopimelate + H2O = (2S,6S)-2,6-diaminopimelate + succinate. It functions in the pathway amino-acid biosynthesis; L-lysine biosynthesis via DAP pathway; LL-2,6-diaminopimelate from (S)-tetrahydrodipicolinate (succinylase route): step 3/3. Catalyzes the hydrolysis of N-succinyl-L,L-diaminopimelic acid (SDAP), forming succinate and LL-2,6-diaminopimelate (DAP), an intermediate involved in the bacterial biosynthesis of lysine and meso-diaminopimelic acid, an essential component of bacterial cell walls. The chain is Succinyl-diaminopimelate desuccinylase 2 from Shewanella loihica (strain ATCC BAA-1088 / PV-4).